Here is a 119-residue protein sequence, read N- to C-terminus: Large ribosomal subunit protein bL20 (119 aa).

It belongs to the bacterial ribosomal protein bL20 family.

Functionally, binds directly to 23S ribosomal RNA and is necessary for the in vitro assembly process of the 50S ribosomal subunit. It is not involved in the protein synthesizing functions of that subunit. This chain is Large ribosomal subunit protein bL20, found in Bordetella bronchiseptica (strain ATCC BAA-588 / NCTC 13252 / RB50) (Alcaligenes bronchisepticus).